The primary structure comprises 76 residues: Small ribosomal subunit protein bS18 (76 aa).

Belongs to the bacterial ribosomal protein bS18 family. Part of the 30S ribosomal subunit. Forms a tight heterodimer with protein bS6.

Its function is as follows. Binds as a heterodimer with protein bS6 to the central domain of the 16S rRNA, where it helps stabilize the platform of the 30S subunit. This is Small ribosomal subunit protein bS18 from Alcanivorax borkumensis (strain ATCC 700651 / DSM 11573 / NCIMB 13689 / SK2).